We begin with the raw amino-acid sequence, 210 residues long: MELEVRDFTTEINILDSEKFSVSDEIFKCPFNQALIHQVISTYLTNSRQGTRSQKSRSEVSGSNKKPWRQKGTGRARSGSVKSPIWRSGGVTFAAKPKLYAQKINKKMYRGAIRSILSKLVCDNRLFLVRNLFIKEPKTKLLLEKLRTITSKKSILIFTDFLDKNLLLASRNVHKIEVRTATHIDPVSLINFNVTLIADNVIKKIEKQLV.

Over residues 47–64 (SRQGTRSQKSRSEVSGSN) the composition is skewed to polar residues. Residues 47 to 83 (SRQGTRSQKSRSEVSGSNKKPWRQKGTGRARSGSVKS) are disordered.

It belongs to the universal ribosomal protein uL4 family. As to quaternary structure, part of the 50S ribosomal subunit.

Its function is as follows. One of the primary rRNA binding proteins, this protein initially binds near the 5'-end of the 23S rRNA. It is important during the early stages of 50S assembly. It makes multiple contacts with different domains of the 23S rRNA in the assembled 50S subunit and ribosome. Functionally, forms part of the polypeptide exit tunnel. The chain is Large ribosomal subunit protein uL4 from Blochmanniella pennsylvanica (strain BPEN).